Consider the following 128-residue polypeptide: Small ribosomal subunit protein uS9 (128 aa).

It belongs to the universal ribosomal protein uS9 family.

The sequence is that of Small ribosomal subunit protein uS9 from Christiangramia forsetii (strain DSM 17595 / CGMCC 1.15422 / KT0803) (Gramella forsetii).